We begin with the raw amino-acid sequence, 550 residues long: Epidermal growth factor-like protein 6 (550 aa).

The signal sequence occupies residues 1 to 18 (MQPPWGLALPLLLPWVTG). An EGF-like 1 domain is found at 55 to 90 (NKGVCEAMCEPRCKFGECVGPNKCRCFPGYTGKTCT). Intrachain disulfides connect cysteine 59/cysteine 72, cysteine 63/cysteine 78, cysteine 80/cysteine 89, cysteine 96/cysteine 107, cysteine 103/cysteine 116, and cysteine 118/cysteine 130. Positions 92-131 (DVNECGVKPRPCQHRCVNTHGSYKCFCLSGHMLLPDATCS) constitute an EGF-like 2; calcium-binding domain. Residues 135-171 (TCARLNCQYGCEDTEEGPRCVCPSSGLRLGPNGRVCL) form the EGF-like 3 domain. Positions 172–210 (DIDECASSKAVCPSNRRCVNTFGSYYCKCHIGFELKYIG) constitute an EGF-like 4; calcium-binding domain. 5 cysteine pairs are disulfide-bonded: cysteine 176–cysteine 189, cysteine 183–cysteine 198, cysteine 221–cysteine 234, cysteine 228–cysteine 243, and cysteine 245–cysteine 256. Residues 217 to 257 (DINECALNTHPCSPHANCLNTRGSFKCKCKQGYRGNGLQCS) enclose the EGF-like 5; calcium-binding domain. The disordered stretch occupies residues 295 to 354 (KMVTPRPASTRVPKVNLPYSSEEGVSRGRNYDGEQKKKEEGKRERLEEEKGEKTLRNEVE). Positions 318–354 (GVSRGRNYDGEQKKKEEGKRERLEEEKGEKTLRNEVE) are enriched in basic and acidic residues. Positions 327–357 (GEQKKKEEGKRERLEEEKGEKTLRNEVEQER) form a coiled coil. The N-linked (GlcNAc...) asparagine glycan is linked to asparagine 394. One can recognise an MAM domain in the interval 397-543 (VDCSFDLGVC…VLLVSGLCPD (147 aa)).

Belongs to the nephronectin family. In terms of tissue distribution, expressed at basement membrane of pelage follicles (at protein level).

It is found in the secreted. It localises to the extracellular space. Its subcellular location is the extracellular matrix. The protein resides in the basement membrane. Functionally, may bind integrin alpha-8/beta-1 and play a role in hair follicle morphogenesis. Promotes matrix assembly. The sequence is that of Epidermal growth factor-like protein 6 (Egfl6) from Mus musculus (Mouse).